The chain runs to 967 residues: Sodium/potassium exporting P-type ATPase 1 (967 aa).

Over 1–70 (MEGSGDKRHE…GVNPWKILLR (70 aa)) the chain is Cytoplasmic. The helical transmembrane segment at 71–91 (QVSNGLTAVLVVAMVVSFAVK) threads the bilayer. Residue Asp92 is a topological domain, extracellular. A helical membrane pass occupies residues 93-113 (YAEAGVLVIVIAFNTIVGFVQ). Residues 114–254 (EYRAEKTMDA…TQSTPMQRKL (141 aa)) lie on the Cytoplasmic side of the membrane. Residues 255-275 (NLMAYMLLAFALLLALIVFAV) form a helical membrane-spanning segment. Topologically, residues 276–283 (NKFNFSTE) are extracellular. Asn279 carries N-linked (GlcNAc...) asparagine glycosylation. Residues 284–304 (VVIYAIALSIAIIPEGLIAVI) traverse the membrane as a helical segment. At 305–732 (TIVQALGVRR…GRRIFSNIKK (428 aa)) the chain is on the cytoplasmic side. Catalysis depends on Asp340, which acts as the 4-aspartylphosphate intermediate. Asp340 and Thr342 together coordinate Mg(2+). ATP is bound by residues Thr342, Glu425, Lys478, Arg523, Thr587, Gly588, Asp589, Arg651, and Lys657. Position 676 (Asp676) interacts with Mg(2+). Asn679 serves as a coordination point for ATP. The helical transmembrane segment at 733-753 (FVLHLLSTNVGQVIVLLIGLA) threads the bilayer. Residues 754-812 (FKDRTGTSVFPLSPVQILFLNLVTGTPPAMALGIEPASSSVMQVPPHVKGLFTVELIMD) are Extracellular-facing. Residues 813–833 (IFIFGTFIGILALASWVLVIY) form a helical membrane-spanning segment. Residues 834–900 (PFGNSDLATL…GGASRFFSNK (67 aa)) are Cytoplasmic-facing. A helical transmembrane segment spans residues 901-921 (VLVASVFIGALLPIPTIYIGT). At 922-931 (LNTEVFKQEG) the chain is on the extracellular side. Residues 932-952 (ITWEWIIVIVSVFVFFLLSEF) form a helical membrane-spanning segment. Over 953–967 (YKLLKRRFIKTPYNM) the chain is Cytoplasmic.

Belongs to the cation transport ATPase (P-type) (TC 3.A.3) family. Type IID subfamily. The cofactor is Mg(2+). Post-translationally, the active site is phosphorylated in presence of sodium or potassium and in conditions of higher pH. Not phosphorylated in presence of calcium ions.

Its subcellular location is the cell membrane. It carries out the reaction Na(+)(in) + ATP + H2O = Na(+)(out) + ADP + phosphate + H(+). It catalyses the reaction K(+)(in) + ATP + H2O = K(+)(out) + ADP + phosphate + H(+). Its function is as follows. Catalyzes the hydrolysis of ATP coupled with the export of sodium and potassium from the cell. May pump potassium inefficiently. May transport other cations such as lithium. Sodium/potassium efflux ATPases are involved in salt tolerance and maintaining the membrane potential across the plasma membrane in high salinity (Na+) or alkaline (K+) environments. The chain is Sodium/potassium exporting P-type ATPase 1 from Physcomitrium patens (Spreading-leaved earth moss).